A 30-amino-acid chain; its full sequence is Pyrrole-2-carboxylate oxygenase (30 aa).

In terms of assembly, homotrimer. The cofactor is FAD.

It catalyses the reaction pyrrole-2-carboxylate + NADH + O2 + H(+) = 5-hydroxypyrrole-2-carboxylate + NAD(+) + H2O. Its function is as follows. Monooxygenase that initiates the degradation of pyrrole-2-carboxylate, which allows Arthrobacter sp. strain Py1 to grow on pyrrole-2-carboxylate as sole carbon, nitrogen, and energy source. To a lesser extent, can also use pyrrole, pyrrole-2-aldehyde, and indole-2-carboxylate as substrate. This chain is Pyrrole-2-carboxylate oxygenase, found in Arthrobacter sp. (strain Py1).